The following is a 324-amino-acid chain: Biotin synthase (324 aa).

The 229-residue stretch at 50-278 folds into the Radical SAM core domain; that stretch reads HAGPAFTCAI…QADILVAGGR (229 aa). Residues C67, C71, and C74 each contribute to the [4Fe-4S] cluster site. Positions 143 and 203 each coordinate [2Fe-2S] cluster.

This sequence belongs to the radical SAM superfamily. Biotin synthase family. Homodimer. Requires [4Fe-4S] cluster as cofactor. The cofactor is [2Fe-2S] cluster.

The enzyme catalyses (4R,5S)-dethiobiotin + (sulfur carrier)-SH + 2 reduced [2Fe-2S]-[ferredoxin] + 2 S-adenosyl-L-methionine = (sulfur carrier)-H + biotin + 2 5'-deoxyadenosine + 2 L-methionine + 2 oxidized [2Fe-2S]-[ferredoxin]. Its pathway is cofactor biosynthesis; biotin biosynthesis; biotin from 7,8-diaminononanoate: step 2/2. Functionally, catalyzes the conversion of dethiobiotin (DTB) to biotin by the insertion of a sulfur atom into dethiobiotin via a radical-based mechanism. The chain is Biotin synthase from Oleidesulfovibrio alaskensis (strain ATCC BAA-1058 / DSM 17464 / G20) (Desulfovibrio alaskensis).